The following is a 325-amino-acid chain: 5-dehydro-2-deoxygluconokinase (325 aa).

It belongs to the carbohydrate kinase PfkB family.

It carries out the reaction 5-dehydro-2-deoxy-D-gluconate + ATP = 6-phospho-5-dehydro-2-deoxy-D-gluconate + ADP + H(+). Its pathway is polyol metabolism; myo-inositol degradation into acetyl-CoA; acetyl-CoA from myo-inositol: step 5/7. In terms of biological role, catalyzes the phosphorylation of 5-dehydro-2-deoxy-D-gluconate (2-deoxy-5-keto-D-gluconate or DKG) to 6-phospho-5-dehydro-2-deoxy-D-gluconate (DKGP). The sequence is that of 5-dehydro-2-deoxygluconokinase from Listeria monocytogenes serovar 1/2a (strain ATCC BAA-679 / EGD-e).